A 380-amino-acid chain; its full sequence is Cytochrome b (380 aa).

Transmembrane regions (helical) follow at residues 33-53 (FGSL…FLAM), 77-98 (WLLR…YLHI), 113-133 (WNIG…GYVL), and 178-198 (FFTF…LHLL). Heme b is bound by residues His-83 and His-97. Heme b-binding residues include His-182 and His-196. A ubiquinone is bound at residue His-201. The next 4 helical transmembrane spans lie at 226-246 (YKDL…ALLN), 288-308 (LGGV…PTLH), 320-340 (SSQT…WIGG), and 347-367 (FIII…FFIP).

It belongs to the cytochrome b family. In terms of assembly, the cytochrome bc1 complex contains 3 respiratory subunits (MT-CYB, CYC1 and UQCRFS1), 2 core proteins (UQCRC1 and UQCRC2) and probably 6 low-molecular weight proteins. Heme b is required as a cofactor.

Its subcellular location is the mitochondrion inner membrane. Functionally, component of the ubiquinol-cytochrome c reductase complex (complex III or cytochrome b-c1 complex) that is part of the mitochondrial respiratory chain. The b-c1 complex mediates electron transfer from ubiquinol to cytochrome c. Contributes to the generation of a proton gradient across the mitochondrial membrane that is then used for ATP synthesis. The sequence is that of Cytochrome b (mt-cyb) from Lepisosteus oculatus (Spotted gar).